The sequence spans 200 residues: uncharacterized protein (200 aa).

This is an uncharacterized protein from Xylella fastidiosa (strain 9a5c).